The primary structure comprises 374 residues: Zinc finger CCCH domain-containing protein 15 homolog (374 aa).

C3H1-type zinc fingers lie at residues 89–116 (DPKSLLCVFFKQGLCGKGAKCKFSHDLA) and 167–197 (YFLEAVENNKYGWFWECPNGGDKCQYRHCLP).

The protein belongs to the ZC3H15/TMA46 family.

This chain is Zinc finger CCCH domain-containing protein 15 homolog, found in Caenorhabditis briggsae.